The chain runs to 380 residues: N-acetylaspartylglutamate synthase A (380 aa).

Residues 115–300 (FQELAGHGVP…VGAIIADYAM (186 aa)) enclose the ATP-grasp domain. ATP-binding positions include K154, 189-199 (QKYVKESHGKD), and R215. Mg(2+)-binding residues include D260, E273, and N275. D260, E273, and N275 together coordinate Mn(2+). S319 bears the Phosphoserine mark. A disordered region spans residues 345 to 370 (GSTSSESEPELGEARDSSVKTMGAPP).

It belongs to the RimK family. Requires Mg(2+) as cofactor. Mn(2+) is required as a cofactor. Highly expressed in spinal cord and brain.

Its subcellular location is the cytoplasm. It carries out the reaction N-acetyl-L-aspartate + L-glutamate + ATP = N-acetyl-L-aspartyl-L-glutamate + ADP + phosphate + H(+). It catalyses the reaction N-acetyl-L-aspartate + 2 L-glutamate + 2 ATP = N-acetyl-L-aspartyl-L-glutamyl-L-glutamate + 2 ADP + 2 phosphate + 2 H(+). Its function is as follows. Catalyzes the synthesis of N-acetyl-L-aspartyl-L-glutamate (NAAG) and N-acetyl-L-aspartyl-L-glutamyl-L-glutamate. The polypeptide is N-acetylaspartylglutamate synthase A (Rimkla) (Mus musculus (Mouse)).